Reading from the N-terminus, the 549-residue chain is Myotubularin-related protein 9 (549 aa).

Methionine 1 carries the post-translational modification N-acetylmethionine. Residues alanine 4–leucine 99 enclose the GRAM domain. A Myotubularin phosphatase domain is found at glycine 123–phenylalanine 498. Residues leucine 508–glutamate 542 adopt a coiled-coil conformation. Serine 548 carries the post-translational modification Phosphoserine.

The protein belongs to the protein-tyrosine phosphatase family. Non-receptor class myotubularin subfamily. Homodimer. Heterodimer (via C-terminus) with lipid phosphatase MTMR6 (via C-terminus). Heterodimer (via coiled coil domain) with lipid phosphatase MTMR7 (via C-terminus). Heterodimer with lipid phosphatase MTMR8.

It is found in the cytoplasm. The protein localises to the cell projection. The protein resides in the ruffle membrane. It localises to the perinuclear region. Its subcellular location is the endoplasmic reticulum. Functionally, acts as an adapter for myotubularin-related phosphatases. Increases lipid phosphatase MTMR6 catalytic activity, specifically towards phosphatidylinositol 3,5-bisphosphate, and MTMR6 binding affinity for phosphorylated phosphatidylinositols. Positively regulates lipid phosphatase MTMR7 catalytic activity. Increases MTMR8 catalytic activity towards phosphatidylinositol 3-phosphate. The formation of the MTMR6-MTMR9 complex, stabilizes both MTMR6 and MTMR9 protein levels. Stabilizes MTMR8 protein levels. Plays a role in the late stages of macropinocytosis possibly by regulating MTMR6-mediated dephosphorylation of phosphatidylinositol 3-phosphate in membrane ruffles. Negatively regulates autophagy, in part via its association with MTMR8. Negatively regulates DNA damage-induced apoptosis, in part via its association with MTMR6. Does not bind mono-, di- and tri-phosphorylated phosphatidylinositols, phosphatidic acid and phosphatidylserine. This chain is Myotubularin-related protein 9 (MTMR9), found in Bos taurus (Bovine).